We begin with the raw amino-acid sequence, 233 residues long: UPF0128 protein MJ1463 (233 aa).

This sequence belongs to the UPF0128 family.

This chain is UPF0128 protein MJ1463, found in Methanocaldococcus jannaschii (strain ATCC 43067 / DSM 2661 / JAL-1 / JCM 10045 / NBRC 100440) (Methanococcus jannaschii).